We begin with the raw amino-acid sequence, 144 residues long: 3-hydroxyacyl-[acyl-carrier-protein] dehydratase FabZ (144 aa).

The active site involves histidine 49.

The protein belongs to the thioester dehydratase family. FabZ subfamily.

It localises to the cytoplasm. It carries out the reaction a (3R)-hydroxyacyl-[ACP] = a (2E)-enoyl-[ACP] + H2O. Its function is as follows. Involved in unsaturated fatty acids biosynthesis. Catalyzes the dehydration of short chain beta-hydroxyacyl-ACPs and long chain saturated and unsaturated beta-hydroxyacyl-ACPs. In Alkaliphilus oremlandii (strain OhILAs) (Clostridium oremlandii (strain OhILAs)), this protein is 3-hydroxyacyl-[acyl-carrier-protein] dehydratase FabZ.